The following is a 340-amino-acid chain: Phosphoribosylformylglycinamidine cyclo-ligase (340 aa).

The protein belongs to the AIR synthase family.

The protein localises to the cytoplasm. The catalysed reaction is 2-formamido-N(1)-(5-O-phospho-beta-D-ribosyl)acetamidine + ATP = 5-amino-1-(5-phospho-beta-D-ribosyl)imidazole + ADP + phosphate + H(+). The protein operates within purine metabolism; IMP biosynthesis via de novo pathway; 5-amino-1-(5-phospho-D-ribosyl)imidazole from N(2)-formyl-N(1)-(5-phospho-D-ribosyl)glycinamide: step 2/2. The sequence is that of Phosphoribosylformylglycinamidine cyclo-ligase from Streptococcus pyogenes serotype M28 (strain MGAS6180).